The primary structure comprises 85 residues: Putative membrane protein insertion efficiency factor (85 aa).

Residues 66–85 (PLNSGGDDPVPPKLDDNREH) are disordered.

The protein belongs to the UPF0161 family.

It localises to the cell inner membrane. In terms of biological role, could be involved in insertion of integral membrane proteins into the membrane. This chain is Putative membrane protein insertion efficiency factor, found in Yersinia pestis bv. Antiqua (strain Antiqua).